The sequence spans 364 residues: Mannose-1-phosphate guanyltransferase (364 aa).

Belongs to the transferase hexapeptide repeat family.

Its subcellular location is the cytoplasm. It catalyses the reaction alpha-D-mannose 1-phosphate + GTP + H(+) = GDP-alpha-D-mannose + diphosphate. It participates in nucleotide-sugar biosynthesis; GDP-alpha-D-mannose biosynthesis; GDP-alpha-D-mannose from alpha-D-mannose 1-phosphate (GTP route): step 1/1. In terms of biological role, involved in cell wall synthesis where it is required for glycosylation. Involved in cell cycle progression through cell-size checkpoint. This Pichia angusta (Yeast) protein is Mannose-1-phosphate guanyltransferase (MPG1).